The sequence spans 323 residues: tRNA U34 carboxymethyltransferase (323 aa).

Carboxy-S-adenosyl-L-methionine is bound by residues lysine 91, tryptophan 105, lysine 110, glycine 130, 181–182 (IE), methionine 196, tyrosine 200, and arginine 315.

This sequence belongs to the class I-like SAM-binding methyltransferase superfamily. CmoB family. Homotetramer.

The enzyme catalyses carboxy-S-adenosyl-L-methionine + 5-hydroxyuridine(34) in tRNA = 5-carboxymethoxyuridine(34) in tRNA + S-adenosyl-L-homocysteine + H(+). Catalyzes carboxymethyl transfer from carboxy-S-adenosyl-L-methionine (Cx-SAM) to 5-hydroxyuridine (ho5U) to form 5-carboxymethoxyuridine (cmo5U) at position 34 in tRNAs. This chain is tRNA U34 carboxymethyltransferase, found in Yersinia pestis bv. Antiqua (strain Antiqua).